Here is a 271-residue protein sequence, read N- to C-terminus: Elongation factor Ts (271 aa).

Residues 76 to 79 (TDFV) form an involved in Mg(2+) ion dislocation from EF-Tu region.

The protein belongs to the EF-Ts family.

The protein resides in the cytoplasm. Its function is as follows. Associates with the EF-Tu.GDP complex and induces the exchange of GDP to GTP. It remains bound to the aminoacyl-tRNA.EF-Tu.GTP complex up to the GTP hydrolysis stage on the ribosome. The sequence is that of Elongation factor Ts from Mycolicibacterium vanbaalenii (strain DSM 7251 / JCM 13017 / BCRC 16820 / KCTC 9966 / NRRL B-24157 / PYR-1) (Mycobacterium vanbaalenii).